A 743-amino-acid polypeptide reads, in one-letter code: Inhibitor of nuclear factor kappa-B kinase subunit alpha (743 aa).

Residues 15–300 (WDMKDRLGTG…IDCGRPRCFM (286 aa)) enclose the Protein kinase domain. Residues 21–29 (LGTGGFGNV) and lysine 44 each bind ATP. The Proton acceptor role is filled by aspartate 144. A leucine-zipper region spans residues 453–474 (LLRFNTNLTKMKNTMVSASQQL). Positions 736–741 (MDFSWL) are NEMO-binding.

The protein belongs to the protein kinase superfamily. Ser/Thr protein kinase family. I-kappa-B kinase subfamily.

It localises to the cytoplasm. The protein resides in the nucleus. It carries out the reaction L-seryl-[I-kappa-B protein] + ATP = O-phospho-L-seryl-[I-kappa-B protein] + ADP + H(+). Activated when phosphorylated and inactivated when dephosphorylated. In terms of biological role, phosphorylates inhibitors of NF-kappa-B thus leading to the dissociation of the inhibitor/NF-kappa-B complex and ultimately the degradation of the inhibitor. Phosphorylates 'Ser-10' of histone H3 at NF-kappa-B-regulated promoters during inflammatory responses triggered by cytokines. In Xenopus laevis (African clawed frog), this protein is Inhibitor of nuclear factor kappa-B kinase subunit alpha (chuk).